Consider the following 90-residue polypeptide: Arminin 45266 (90 aa).

The signal sequence occupies residues 1–20 (MKSASLILFVALVALTYARS). The propeptide occupies 21-59 (YEDVKEEIKNEVEKEILDDLEEENDELDDNTQEVNDPRA). The residue at position 87 (T87) is a Threonine amide.

Belongs to the arminin family. Expressed in entodermal epithelium along the body column.

Its subcellular location is the secreted. The protein resides in the target cell membrane. Its function is as follows. Antimicrobial peptide with a broad-spectrum antimicrobial activity. Keeps its antibacterial activity under a wide range of salt concentrations that mimic physiological conditions of human blood, which is surprising, since Hydra is an obligate freshwater animal with nearly no salt tolerance. Does not affect red blood cells. This chain is Arminin 45266, found in Hydra vulgaris (Hydra).